The chain runs to 237 residues: MPTAYKRVLLKLSGEALMGDDAFGINRATIERMVADVAEVVRLGTQLAVVIGGGNIFRGVAGGAAGMDRATADYMGMLATMMNALALQDAMRHAGIEARVQSALRMDQVVEPYIRPRAIRQLEEGKVVIFAAGTGNPFFTTDTAAALRGSEIGAEVVLKATKVDGVYSADPKKDPSATRYTTISFDEAIGRNLQVMDATAFALCRDQKLPIRVFSIVKPGALKRIVQGEDEGTLVHV.

11–14 (KLSG) lines the ATP pocket. Gly-53 provides a ligand contact to UMP. The ATP site is built by Gly-54 and Arg-58. Residues Asp-73 and 134-141 (TGNPFFTT) contribute to the UMP site. 3 residues coordinate ATP: Thr-161, Tyr-167, and Asp-170.

The protein belongs to the UMP kinase family. Homohexamer.

It is found in the cytoplasm. It carries out the reaction UMP + ATP = UDP + ADP. Its pathway is pyrimidine metabolism; CTP biosynthesis via de novo pathway; UDP from UMP (UMPK route): step 1/1. With respect to regulation, inhibited by UTP. Functionally, catalyzes the reversible phosphorylation of UMP to UDP. The protein is Uridylate kinase of Paraburkholderia xenovorans (strain LB400).